The chain runs to 386 residues: MLGLPGEMQYVPGIHSPNEGPRPMTIQRKQTREVRIGKVRIGGANPVVVQSMTNTDTRDVEQTVEQIRQLQEAGCEIVRLAVLNEDAAWAIKPIRSQVSVPLVADIHFDHRLAVSALEAGVDALRINPGNIGTRAAVDRVVDAAKAHNAVIRIGVNSGSLETDLIDQYGGPTPEAMVESAFRHIRMLEDRNFGDIKVSLKSSSVSRCIEAYTLLSAKCDYPLHIGVTEAGTVLRGSIKSAVGLGVLLWQGIGDTLRVSLTSDPVAEMAVAWEILRSLGLRSRGPEIIACPTCGRCEIGLIALAEEVERRLEGETESFKVAVMGCVVNGPGEAREADLGIAGGRDKGIIFRKGEIVRTVKGGSNLLAAFMEELDTFLAHRRAERKDD.

The [4Fe-4S] cluster site is built by Cys-289, Cys-292, Cys-324, and Glu-331.

Belongs to the IspG family. [4Fe-4S] cluster serves as cofactor.

It carries out the reaction (2E)-4-hydroxy-3-methylbut-2-enyl diphosphate + oxidized [flavodoxin] + H2O + 2 H(+) = 2-C-methyl-D-erythritol 2,4-cyclic diphosphate + reduced [flavodoxin]. The protein operates within isoprenoid biosynthesis; isopentenyl diphosphate biosynthesis via DXP pathway; isopentenyl diphosphate from 1-deoxy-D-xylulose 5-phosphate: step 5/6. Its function is as follows. Converts 2C-methyl-D-erythritol 2,4-cyclodiphosphate (ME-2,4cPP) into 1-hydroxy-2-methyl-2-(E)-butenyl 4-diphosphate. The sequence is that of 4-hydroxy-3-methylbut-2-en-1-yl diphosphate synthase (flavodoxin) from Nitratidesulfovibrio vulgaris (strain ATCC 29579 / DSM 644 / CCUG 34227 / NCIMB 8303 / VKM B-1760 / Hildenborough) (Desulfovibrio vulgaris).